Here is a 261-residue protein sequence, read N- to C-terminus: Ribonuclease HII (261 aa).

Positions 71-259 constitute an RNase H type-2 domain; it reads QYIAGVDEVG…VKEAKLHFES (189 aa). Residues Asp77, Glu78, and Asp169 each coordinate a divalent metal cation.

Belongs to the RNase HII family. Mn(2+) is required as a cofactor. Mg(2+) serves as cofactor.

It localises to the cytoplasm. It carries out the reaction Endonucleolytic cleavage to 5'-phosphomonoester.. Its function is as follows. Endonuclease that specifically degrades the RNA of RNA-DNA hybrids. The protein is Ribonuclease HII of Listeria innocua serovar 6a (strain ATCC BAA-680 / CLIP 11262).